A 294-amino-acid chain; its full sequence is Octopine-binding periplasmic protein (294 aa).

Positions 1-20 (MRLKSIMCAALFVVAGQAAA) are cleaved as a signal peptide. Cysteine 57 and cysteine 64 are disulfide-bonded.

This sequence belongs to the bacterial solute-binding protein 3 family.

It localises to the periplasm. In terms of biological role, component of the octopine active transport system probably consisting of four subunits: Q, M, P and T. The protein is Octopine-binding periplasmic protein (occT) of Rhizobium meliloti (Ensifer meliloti).